An 83-amino-acid polypeptide reads, in one-letter code: Delta-conotoxin-like Ac6.1 (83 aa).

Residues 1–22 (MKLTCVVIVAVLFLTAWTFVMA) form the signal peptide. Residues 23 to 51 (DDSRYGLKDLFPKARHEMKNPEASKLNKR) constitute a propeptide that is removed on maturation. 3 disulfides stabilise this stretch: Cys54–Cys69, Cys61–Cys73, and Cys68–Cys78. Residues Pro57 and Pro65 each carry the 4-hydroxyproline modification.

This sequence belongs to the conotoxin O1 superfamily. As to expression, expressed by the venom duct.

Its subcellular location is the secreted. In terms of biological role, delta-conotoxins bind to site 6 of voltage-gated sodium channels (Nav) and inhibit the inactivation process. The chain is Delta-conotoxin-like Ac6.1 from Conus achatinus (Little frog cone).